The sequence spans 453 residues: Fibrinogen gamma chain (453 aa).

The signal sequence occupies residues 1 to 26; the sequence is MSWSLHPRNLILYFYALLFLSSTCVA. Residue S68 is modified to Phosphoserine; by FAM20C. N-linked (GlcNAc...) (complex) asparagine glycosylation occurs at N78. One can recognise a Fibrinogen C-terminal domain in the interval 170-416; sequence QIHDITGKDC…KTTMKIIPFN (247 aa). Residues C179 and C208 are joined by a disulfide bond. N334 carries an N-linked (GlcNAc...) asparagine; in variant Asahi glycan. Ca(2+) is bound by residues D344, D346, F348, and G350. C352 and C365 form a disulfide bridge. A gamma-chain polymerization, binding amino end of another fibrin alpha chain region spans residues 400 to 422; that stretch reads TRWYSMKKTTMKIIPFNRLTIGE. The segment at 423 to 437 is platelet aggregation and Staphylococcus clumping; it reads GQQHHLGGAKQVRPE. An Isoglutamyl lysine isopeptide (Gln-Lys) (interchain with K-432) cross-link involves residue Q424. A disordered region spans residues 424–453; the sequence is QQHHLGGAKQVRPEHPAETEYDSLYPEDDL. Residue K432 forms an Isoglutamyl lysine isopeptide (Lys-Gln) (interchain with Q-424) linkage. The span at 442-453 shows a compositional bias: acidic residues; it reads TEYDSLYPEDDL. 2 positions are modified to sulfotyrosine: Y444 and Y448.

In terms of assembly, heterohexamer; disulfide linked. Contains 2 sets of 3 non-identical chains (alpha, beta and gamma). The 2 heterotrimers are in head to head conformation with the N-termini in a small central domain. Conversion of fibrinogen to fibrin is triggered by thrombin, which cleaves fibrinopeptides A and B from alpha and beta chains, and thus exposes the N-terminal polymerization sites responsible for the formation of the soft clot. The soft clot is converted into the hard clot by factor XIIIA which catalyzes the epsilon-(gamma-glutamyl)lysine cross-linking between gamma chains (stronger) and between alpha chains (weaker) of different monomers. Post-translationally, sulfation of C-terminal tyrosines increases affinity for thrombin. As to expression, detected in blood plasma (at protein level).

Its subcellular location is the secreted. Its function is as follows. Together with fibrinogen alpha (FGA) and fibrinogen beta (FGB), polymerizes to form an insoluble fibrin matrix. Has a major function in hemostasis as one of the primary components of blood clots. In addition, functions during the early stages of wound repair to stabilize the lesion and guide cell migration during re-epithelialization. Was originally thought to be essential for platelet aggregation, based on in vitro studies using anticoagulated blood. However, subsequent studies have shown that it is not absolutely required for thrombus formation in vivo. Enhances expression of SELP in activated platelets via an ITGB3-dependent pathway. Maternal fibrinogen is essential for successful pregnancy. Fibrin deposition is also associated with infection, where it protects against IFNG-mediated hemorrhage. May also facilitate the antibacterial immune response via both innate and T-cell mediated pathways. This is Fibrinogen gamma chain (FGG) from Homo sapiens (Human).